Here is a 210-residue protein sequence, read N- to C-terminus: Large ribosomal subunit protein uL3 (210 aa).

Residues His-125 to Asp-151 are disordered.

It belongs to the universal ribosomal protein uL3 family. Part of the 50S ribosomal subunit. Forms a cluster with proteins L14 and L19.

Its function is as follows. One of the primary rRNA binding proteins, it binds directly near the 3'-end of the 23S rRNA, where it nucleates assembly of the 50S subunit. This is Large ribosomal subunit protein uL3 from Roseiflexus sp. (strain RS-1).